We begin with the raw amino-acid sequence, 116 residues long: RutC family protein HI_1627 (116 aa).

This sequence belongs to the RutC family.

The chain is RutC family protein HI_1627 from Haemophilus influenzae (strain ATCC 51907 / DSM 11121 / KW20 / Rd).